We begin with the raw amino-acid sequence, 891 residues long: MSGVNEIRSTFLDYFRDAGHAVVPSSSLVPKNDPTLMFTNAGMVQFKNVFTGVEKRPYVKATSSQKCVRAGGKHNDLDNVGYTARHHTFFEMLGNFSFGDYFKADAIELAWTLITKEFGLSPEKLLVTVYADDEEAAGLWRKIAGFSDEKIIRIGTSDNFWQMGDTGPCGPCSEIFIDQGPTLAGGPPGSPDEDGDRFLEFWNLVFMQYEQVEPGVRNSLPRPSIDTGMGLERMAAILQGVHSNYDTDLFRALIDAVAHAVSRAPEPSTRASYRVIADHLRSTSFLIADGVLPSNEGRGYVLRRIMRRAMRHLELLGARDPVMYRLVPTLVREMGQAFPELARSEALISETLRLEEGRFRKTLERGLAILDTETRDLAAGQNLSGETAFTLYDTYGFPLDLTQDALKARGIGVDTKAFDAAMLRQKQAARAAWQGSGEAATETVWFGIKERTGATEFLGYDTEAAEAVIGALLRDGAEVETLKAGENGIVVANQTPFYGESGGQVGDTGTISGPGLKARVTGTEKKLGDLFVHHVTVEEGTLAVGAAVELKVDHARRAAIRANHSATHLLHEALRQVLGDHVAQKGSLVAPERLRFDISHPKPIDEAELSRVEEIANAVLLQNAPVVTKLMAVDEAIESGARALFGEKYGDEVRVVSMGRPVDDEGREVEGRLPNFSIELCGGTHVSQLGEIGQITVLGESAVGAGVRRIEAMTGTAARRHRATESRTLSQLAGLLKAPVADVPERLSTLIEERRRLEKELADARKKIAMGGASGGGDEAREINGVKLMARVVEGVEMRDLKGLADEGKTRLGSGIVALVGVSADGKAGLVVGVTEDLTGRYDAVELVRAGAGHLGGKGGGGRRDMAQAGGPDGAGADAALAAIAEALAAG.

4 residues coordinate Zn(2+): His-564, His-568, Cys-681, and His-685.

It belongs to the class-II aminoacyl-tRNA synthetase family. Requires Zn(2+) as cofactor.

It is found in the cytoplasm. The catalysed reaction is tRNA(Ala) + L-alanine + ATP = L-alanyl-tRNA(Ala) + AMP + diphosphate. Catalyzes the attachment of alanine to tRNA(Ala) in a two-step reaction: alanine is first activated by ATP to form Ala-AMP and then transferred to the acceptor end of tRNA(Ala). Also edits incorrectly charged Ser-tRNA(Ala) and Gly-tRNA(Ala) via its editing domain. This Methylorubrum extorquens (strain PA1) (Methylobacterium extorquens) protein is Alanine--tRNA ligase.